The sequence spans 271 residues: Transmembrane protein 150A (271 aa).

The Cytoplasmic portion of the chain corresponds to 1-2 (MT). A helical transmembrane segment spans residues 3–23 (AWILLPVSLSAFSITGIWTVY). Over 24 to 75 (AMAVMNRHVCPVENWSYNESCSPDPAEQGGPKSCCTLDDVPLISKCGTYPPE) the chain is Extracellular. Asn-37 and Asn-41 each carry an N-linked (GlcNAc...) asparagine glycan. A helical membrane pass occupies residues 76–96 (SCLFSLIGNMGAVMVALICLL). The Cytoplasmic segment spans residues 97-108 (RYGQLLEQSRHS). Residues 109 to 129 (WINTTALITGCTNAAGLVVVG) form a helical membrane-spanning segment. Over 130–140 (NFQVDHAKSLH) the chain is Extracellular. A helical transmembrane segment spans residues 141-161 (YIGTGVAFTAGLLFVCLHCVL). Residues 162–178 (FYHGATTPLDMAMAYLR) lie on the Cytoplasmic side of the membrane. A helical membrane pass occupies residues 179–199 (SVLAVIAFITLVLSGVFFLHE). The Extracellular portion of the chain corresponds to 200–211 (SSQLQHGAALCE). The chain crosses the membrane as a helical span at residues 212–232 (WVFVLDILIFYGTFSYEFGTI). Topologically, residues 233 to 271 (SSDTLVAALQPAPGRACKSSGSSSTSTHLNCAPESIAMI) are cytoplasmic.

The protein belongs to the DRAM/TMEM150 family. Interacts (via C-terminal cytoplasmic tail) with PI4KA.

Its subcellular location is the cell membrane. Its function is as follows. Regulates localization of phosphatidylinositol 4-kinase (PI4K) to the plasma membrane, possibly by reducing the association of TTC7 (TTC7A or TTC7B) with the PI4K complex. Acts as a regulator of phosphatidylinositol 4-phosphate (PtdIns(4)P) synthesis. May also play a role in fasting-induced catabolism. The protein is Transmembrane protein 150A (Tmem150a) of Mus musculus (Mouse).